The primary structure comprises 409 residues: LL-diaminopimelate aminotransferase (409 aa).

2 residues coordinate substrate: tyrosine 15 and glycine 42. Pyridoxal 5'-phosphate-binding positions include tyrosine 72, 108–109 (AK), tyrosine 132, asparagine 186, tyrosine 217, and 245–247 (SFS). Residues lysine 109, tyrosine 132, and asparagine 186 each contribute to the substrate site. The residue at position 248 (lysine 248) is an N6-(pyridoxal phosphate)lysine. Pyridoxal 5'-phosphate-binding residues include arginine 256 and asparagine 291. Residues asparagine 291 and arginine 385 each coordinate substrate.

It belongs to the class-I pyridoxal-phosphate-dependent aminotransferase family. LL-diaminopimelate aminotransferase subfamily. As to quaternary structure, homodimer. It depends on pyridoxal 5'-phosphate as a cofactor.

The catalysed reaction is (2S,6S)-2,6-diaminopimelate + 2-oxoglutarate = (S)-2,3,4,5-tetrahydrodipicolinate + L-glutamate + H2O + H(+). It participates in amino-acid biosynthesis; L-lysine biosynthesis via DAP pathway; LL-2,6-diaminopimelate from (S)-tetrahydrodipicolinate (aminotransferase route): step 1/1. Its function is as follows. Involved in the synthesis of meso-diaminopimelate (m-DAP or DL-DAP), required for both lysine and peptidoglycan biosynthesis. Catalyzes the direct conversion of tetrahydrodipicolinate to LL-diaminopimelate. This is LL-diaminopimelate aminotransferase from Desulfosudis oleivorans (strain DSM 6200 / JCM 39069 / Hxd3) (Desulfococcus oleovorans).